Here is a 427-residue protein sequence, read N- to C-terminus: Acetylornithine aminotransferase, mitochondrial (427 aa).

Lys279 is subject to N6-(pyridoxal phosphate)lysine.

The protein belongs to the class-III pyridoxal-phosphate-dependent aminotransferase family. Pyridoxal 5'-phosphate is required as a cofactor.

The protein resides in the mitochondrion matrix. It catalyses the reaction N(2)-acetyl-L-ornithine + 2-oxoglutarate = N-acetyl-L-glutamate 5-semialdehyde + L-glutamate. Its pathway is amino-acid biosynthesis; L-arginine biosynthesis; N(2)-acetyl-L-ornithine from L-glutamate: step 4/4. The sequence is that of Acetylornithine aminotransferase, mitochondrial (ARG8) from Candida glabrata (strain ATCC 2001 / BCRC 20586 / JCM 3761 / NBRC 0622 / NRRL Y-65 / CBS 138) (Yeast).